The chain runs to 251 residues: Adapter protein MecA (251 aa).

This sequence belongs to the MecA family. In terms of assembly, homodimer.

Functionally, enables the recognition and targeting of unfolded and aggregated proteins to the ClpC protease or to other proteins involved in proteolysis. The polypeptide is Adapter protein MecA (Streptococcus agalactiae serotype III (strain NEM316)).